A 417-amino-acid polypeptide reads, in one-letter code: MLKREMNIADYDAELWQAMEQEKVRQEEHIELIASENYTSPRVMQAQGSQLTNKYAEGYPGKRYYGGCEYVDVVEQLAIDRAKELFGADYANVQPHSGSQANFAVYTALLQPGDTVLGMNLAQGGHLTHGSPVNFSGKLYNIVPYGIDESGKIDYDEMAKLAKEHKPKMIIGGFSAYSGVVDWAKMREIADSIGAYLFVDMAHVAGLIAAGVYPNPVPHAHVVTTTTHKTLAGPRGGLILAKGGDEELYKKLNSAVFPSAQGGPLMHVIAGKAVALKEAMEPEFKVYQQQVAKNAKAMVEVFLNRGYKVVSGGTENHLFLLDLVDKNLTGKEADAALGRANITVNKNSVPNDPKSPFVTSGIRIGSPAVTRRGFKEAEVKELAGWMCDVLDNINDEATIERVKAKVLDICARFPVYA.

(6S)-5,6,7,8-tetrahydrofolate-binding positions include Leu121 and 125–127 (GHL). Lys229 carries the N6-(pyridoxal phosphate)lysine modification. A (6S)-5,6,7,8-tetrahydrofolate-binding site is contributed by 355–357 (SPF).

It belongs to the SHMT family. Homodimer. Requires pyridoxal 5'-phosphate as cofactor.

The protein localises to the cytoplasm. The enzyme catalyses (6R)-5,10-methylene-5,6,7,8-tetrahydrofolate + glycine + H2O = (6S)-5,6,7,8-tetrahydrofolate + L-serine. It participates in one-carbon metabolism; tetrahydrofolate interconversion. Its pathway is amino-acid biosynthesis; glycine biosynthesis; glycine from L-serine: step 1/1. In terms of biological role, catalyzes the reversible interconversion of serine and glycine with tetrahydrofolate (THF) serving as the one-carbon carrier. This reaction serves as the major source of one-carbon groups required for the biosynthesis of purines, thymidylate, methionine, and other important biomolecules. Also exhibits THF-independent aldolase activity toward beta-hydroxyamino acids, producing glycine and aldehydes, via a retro-aldol mechanism. The chain is Serine hydroxymethyltransferase from Salmonella choleraesuis (strain SC-B67).